The chain runs to 173 residues: uncharacterized protein (173 aa).

One can recognise an MSP domain in the interval 16–133 (DLVLRPETIT…KHVLIRFPNK (118 aa)). A compositionally biased stretch (basic and acidic residues) spans 141–163 (KKMEEDDMKQQKERNKLSNEKMG). The segment at 141–173 (KKMEEDDMKQQKERNKLSNEKMGIRNQNMGEKK) is disordered.

This is an uncharacterized protein from Caenorhabditis elegans.